The sequence spans 804 residues: Mechanosensitive cation channel TMEM63A (804 aa).

The Extracellular segment spans residues 1 to 51 (MTSSPFLDPWPSKAVFVRERLGLGERPNDSYCYNSAKNSTVLQGVTFGGIP). Asparagine 38 carries an N-linked (GlcNAc...) asparagine glycan. Residues 52–74 (TVLLLDVSCFLFLILVFSIIRRR) form a helical membrane-spanning segment. At 75-133 (FWDYGRIALVSEAGSEARFQRLSSSSSGQQDFENELGCCPWLTAIFRLHDDQILEWCGE) the chain is on the cytoplasmic side. The chain crosses the membrane as a helical span at residues 134-166 (DAIHYLSFQRHIIFLLVVISFLSLCVILPVNLS). The Extracellular segment spans residues 167–190 (GDLLGKDPYSFGRTTIANLQTDND). The chain crosses the membrane as a helical span at residues 191–216 (LLWLHTVFSVIYLFLTVGFMWHHTRS). Residues 217 to 415 (IRYKEESLVR…CWKNLSIQGV (199 aa)) lie on the Cytoplasmic side of the membrane. The tract at residues 218–413 (RYKEESLVRQ…DICWKNLSIQ (196 aa)) is intracellular linker IL2; confers mechanosensitivity. Residues 416–443 (RWWLQWLGINFSLFVVLFFLTTPSIIMS) form a helical membrane-spanning segment. At 444–461 (TMDKFNVTKPIHALNNPV) the chain is on the extracellular side. An N-linked (GlcNAc...) asparagine glycan is attached at asparagine 449. The helical transmembrane segment at 462–489 (ISQFFPTLLLWSFSALLPSIVYYSTLLE) threads the bilayer. Residues 490 to 494 (SHWTR) are Cytoplasmic-facing. A helical transmembrane segment spans residues 495 to 531 (SGENRIMVSKVYIFLIFMVLILPSLGLTSLDFFFRWL). The Extracellular portion of the chain corresponds to 532–553 (FDKTSSETSIRLECVFLPDQGA). The chain crosses the membrane as a helical span at residues 554–585 (FFVNYVIASAFIGSGMELLRLPGLILYTFRMI). Positions 554-585 (FFVNYVIASAFIGSGMELLRLPGLILYTFRMI) are gating helix. The Cytoplasmic segment spans residues 586–605 (MAKTAADRRNVKQNQAFEYE). Residues 606 to 623 (FGAMYAWMLCVFTVIMAY) form a helical membrane-spanning segment. Residues 624-627 (SITC) are Extracellular-facing. A helical membrane pass occupies residues 628 to 650 (PIIVPFGLIYILLKHMVDRHNLY). At 651–660 (FAYLPAKLEK) the chain is on the cytoplasmic side. The chain crosses the membrane as a helical span at residues 661 to 688 (RIHFAAVNQALAAPILCLFWLFFFSFLR). Topologically, residues 689-693 (LGLTA) are extracellular. A helical membrane pass occupies residues 694–708 (PATLFTFLVVLLTIL). The Cytoplasmic segment spans residues 709-804 (ACLLYTCFGC…GTAAYAYQES (96 aa)). The residue at position 738 (serine 738) is a Phosphoserine.

This sequence belongs to the CSC1 (TC 1.A.17) family. Monomer. In terms of processing, N-Glycosylated.

It is found in the lysosome membrane. The protein localises to the early endosome membrane. Its subcellular location is the cell membrane. It catalyses the reaction Ca(2+)(in) = Ca(2+)(out). Its function is as follows. Mechanosensitive cation channel with low conductance and high activation threshold. In contrast to TMEM63B, does not show phospholipid scramblase activity. Acts as a regulator of lysosomal morphology by mediating lysosomal mechanosensitivity. Important for the baby's first breath and respiration throughout life. Upon lung inflation conducts cation currents in alveolar type 1 and 2 cells triggering lamellar body exocytosis and surfactant secretion into airspace. Also acts as an osmosensitive cation channel preferentially activated by hypotonic stress. The sequence is that of Mechanosensitive cation channel TMEM63A from Mus musculus (Mouse).